The sequence spans 1489 residues: Sex-determining transformer protein 2 (1489 aa).

A signal peptide spans 1–33 (MKLAFNKLLVASVVFTVLSFGLLLASLFTTTAT). 11 consecutive transmembrane segments (helical) span residues 454–474 (MIYF…AFAF), 489–509 (GFIT…ILID), 513–533 (LCYI…VTFI), 600–620 (YWFL…FFID), 622–642 (DVQK…FEEM), 749–769 (AVVV…LLFI), 931–951 (IFAA…FSIG), 958–978 (LAFA…VSLF), 986–1006 (YTNV…CDLA), 1041–1061 (VQIF…TAII), and 1066–1086 (AFFI…FNSL). The tract at residues 1138–1288 (EFSIRPTENT…EQQEVTDDVA (151 aa)) is interaction with fem-3. Disordered stretches follow at residues 1143-1176 (PTEN…DPSM), 1233-1393 (LLRQ…YPPS), and 1412-1489 (RNLP…TPGL). 3 stretches are compositionally biased toward basic and acidic residues: residues 1275–1298 (DPAK…EVRK), 1326–1340 (VSRE…REPR), and 1423–1433 (RPRDWDQRRLV). The interval 1402 to 1423 (CEDVYWKYNERNLPDNVPMPPR) is MX regulatory domain; required for tra-1 binding. Pro residues predominate over residues 1444–1456 (VPPPGRSAIPIPP). Residues 1460-1482 (RLRERRREQHLREQEARRNRPES) show a composition bias toward basic and acidic residues.

As to quaternary structure, interacts with tra-1 and fem-3.

The protein localises to the membrane. In terms of biological role, plays a major role in controlling sexual cell fates. Promotes female development in XX animals where it sequesters one or more of the FEM proteins to the membrane thereby freeing the tra-1 protein (a putative transcription factor) to enter the nucleus and promote female development. In XO animals it acts as a receptor for her-1 which prevents it from binding to FEM proteins thereby repressing the activity of tra-1. Negatively regulates male development when bound to fem-3 and is required together with tra-1 for promoting spermatogenesis. Also required for feminizing tra-3 activity. The protein is Sex-determining transformer protein 2 of Caenorhabditis briggsae.